We begin with the raw amino-acid sequence, 135 residues long: Protein PilG (135 aa).

The Response regulatory domain maps to 9-125 (KVMVIDDSKT…ELLGAIKAHV (117 aa)). 4-aspartylphosphate is present on aspartate 58.

In terms of processing, phosphorylated.

In terms of biological role, plays an essential role in both cAMP-dependent and independent regulation of twitching motility. Regulates the cAMP-independent coordination of type IV pilus (T4P) biogenesis and retraction that plays a role in surface and host cell adhesion, colonization, biofilm maturation, virulence, and twitching. In addition, phosphorylated PilG is necessary for cAMP production via regulation of the adenylate cyclase CyaB. Acts therefore as a response regulator of the chemosensory system/Chp system. The polypeptide is Protein PilG (pilG) (Pseudomonas aeruginosa (strain ATCC 15692 / DSM 22644 / CIP 104116 / JCM 14847 / LMG 12228 / 1C / PRS 101 / PAO1)).